The primary structure comprises 179 residues: Inorganic pyrophosphatase (179 aa).

Positions 30, 44, and 56 each coordinate substrate. The Mg(2+) site is built by D66, D71, and D103. Residue Y142 participates in substrate binding.

It belongs to the PPase family. Homohexamer. Mg(2+) serves as cofactor.

It localises to the cytoplasm. The catalysed reaction is diphosphate + H2O = 2 phosphate + H(+). In terms of biological role, catalyzes the hydrolysis of inorganic pyrophosphate (PPi) forming two phosphate ions. This is Inorganic pyrophosphatase from Rhodospirillum rubrum (strain ATCC 11170 / ATH 1.1.1 / DSM 467 / LMG 4362 / NCIMB 8255 / S1).